A 452-amino-acid polypeptide reads, in one-letter code: MAIIIAAPASGTGKTTITLALLAYLKAHALRVRSFKVGPDYIDPMFHAAVTGQGCVNLDLFLTDEPFVRATYHHHCRGQQAAVIEGVMGLFDGRAGQGDFASTAHVARLLRLPVILVIDGSGAGFSVAATLYGFRRFDPRVRIAGVILNRVGSERHAQILSEAVRSQGLELLGTVYKDETIALPHRHLGLVPVEELSDFRRTQQQLAALAERSFDWQKLLPLVAIQPTAPAPARWEAEPLPPVRIAVARDRAFSFYYQDNLELLAALGAQLETFSPLAGEWPDCRGYLLGGGFPELCAGELSAKTRFWEGLRGAVARGVPLYAECGGLMVLGEALRTPEGRSHPMAGILEASCWMGKRTVLGYRVATALHSSCAVEAGRQLRGHLFHRSRMEPQPGAPLWQLDDDEQEGWVRGNLHASYLHLHWGTQAWAARRFVRRCLAVAFEGKSTPARF.

The GATase cobBQ-type domain occupies 244 to 429 (RIAVARDRAF…LHLHWGTQAW (186 aa)). C325 functions as the Nucleophile in the catalytic mechanism.

It belongs to the CobB/CbiA family. The cofactor is Mg(2+).

The enzyme catalyses cob(II)yrinate + 2 L-glutamine + 2 ATP + 2 H2O = cob(II)yrinate a,c diamide + 2 L-glutamate + 2 ADP + 2 phosphate + 2 H(+). It functions in the pathway cofactor biosynthesis; adenosylcobalamin biosynthesis; cob(II)yrinate a,c-diamide from sirohydrochlorin (anaerobic route): step 10/10. In terms of biological role, catalyzes the ATP-dependent amidation of the two carboxylate groups at positions a and c of cobyrinate, using either L-glutamine or ammonia as the nitrogen source. The polypeptide is Cobyrinate a,c-diamide synthase (Gloeobacter violaceus (strain ATCC 29082 / PCC 7421)).